The chain runs to 1216 residues: 1-phosphatidylinositol 4,5-bisphosphate phosphodiesterase beta-1 (1216 aa).

A lipid anchor (S-palmitoyl cysteine) is attached at C17. S236 is modified (phosphoserine). Residues 316-467 (EDMSQPLSHY…LMYKILVKNK (152 aa)) enclose the PI-PLC X-box domain. Residues H331 and H378 contribute to the active site. S417 bears the Phosphoserine mark. Residues 469 to 534 (KSHKSSEGSG…MDEGTAGSEA (66 aa)) are disordered. The span at 472–483 (KSSEGSGKKKLS) shows a compositional bias: basic and acidic residues. Over residues 491 to 501 (SDSSSVFEPSS) the composition is skewed to low complexity. Over residues 507-518 (ADTESDDDDDDD) the composition is skewed to acidic residues. T509 bears the Phosphothreonine mark. Phosphoserine occurs at positions 511 and 582. The PI-PLC Y-box domain occupies 540–656 (MSNLVNYIQP…GYRLKPEFMR (117 aa)). Residues 656–786 (RRPDKHFDPF…RNERNQPLTL (131 aa)) enclose the C2 domain. Disordered regions lie at residues 834–891 (DEEE…VKAP), 967–989 (EKSA…GSSA), 1072–1095 (MDKK…EEEK), and 1173–1216 (ISED…DTPL). Over residues 846-868 (ETSSEAPSETRTTPAENGVNHTA) the composition is skewed to polar residues. At S887 the chain carries Phosphoserine; by PKC. A compositionally biased stretch (basic and acidic residues) spans 967–979 (EKSAKKDSKKKSE). S978 and S987 each carry phosphoserine. A compositionally biased stretch (basic and acidic residues) spans 1075–1095 (KRQEKITEAKSKDKSQMEEEK). A phosphoserine mark is found at S1197, S1199, and S1200. Basic and acidic residues predominate over residues 1205–1216 (RENPGREFDTPL).

As to quaternary structure, interacts with DGKQ. The cofactor is Ca(2+). Palmitoylated. Palmitoylation at Cys-17 by ZDHHC21 regulates the signaling activity of PLCB1 and the function of the endothelial barrier. Palmitoylation by ZDHHC21 is stimulated by inflammation.

The protein resides in the nucleus membrane. It is found in the cytoplasm. It catalyses the reaction a 1,2-diacyl-sn-glycero-3-phospho-(1D-myo-inositol-4,5-bisphosphate) + H2O = 1D-myo-inositol 1,4,5-trisphosphate + a 1,2-diacyl-sn-glycerol + H(+). The catalysed reaction is a 1,2-diacyl-sn-glycero-3-phospho-(1D-myo-inositol) + H2O = 1D-myo-inositol 1-phosphate + a 1,2-diacyl-sn-glycerol + H(+). Its function is as follows. Catalyzes the hydrolysis of 1-phosphatidylinositol 4,5-bisphosphate into diacylglycerol (DAG) and inositol 1,4,5-trisphosphate (IP3) and mediates intracellular signaling downstream of G protein-coupled receptors. Regulates the function of the endothelial barrier. This Mus musculus (Mouse) protein is 1-phosphatidylinositol 4,5-bisphosphate phosphodiesterase beta-1.